The primary structure comprises 167 residues: NAD(P)H-quinone oxidoreductase subunit I, chloroplastic (167 aa).

4Fe-4S ferredoxin-type domains lie at glycine 55 to lysine 84 and leucine 95 to glutamate 124. Residues cysteine 64, cysteine 67, cysteine 70, cysteine 74, cysteine 104, cysteine 107, cysteine 110, and cysteine 114 each coordinate [4Fe-4S] cluster.

Belongs to the complex I 23 kDa subunit family. As to quaternary structure, NDH is composed of at least 16 different subunits, 5 of which are encoded in the nucleus. It depends on [4Fe-4S] cluster as a cofactor.

It localises to the plastid. It is found in the chloroplast thylakoid membrane. The enzyme catalyses a plastoquinone + NADH + (n+1) H(+)(in) = a plastoquinol + NAD(+) + n H(+)(out). It catalyses the reaction a plastoquinone + NADPH + (n+1) H(+)(in) = a plastoquinol + NADP(+) + n H(+)(out). Its function is as follows. NDH shuttles electrons from NAD(P)H:plastoquinone, via FMN and iron-sulfur (Fe-S) centers, to quinones in the photosynthetic chain and possibly in a chloroplast respiratory chain. The immediate electron acceptor for the enzyme in this species is believed to be plastoquinone. Couples the redox reaction to proton translocation, and thus conserves the redox energy in a proton gradient. The polypeptide is NAD(P)H-quinone oxidoreductase subunit I, chloroplastic (Pelargonium hortorum (Common geranium)).